Reading from the N-terminus, the 339-residue chain is NADH-quinone oxidoreductase subunit H (339 aa).

9 consecutive transmembrane segments (helical) span residues 10–30 (FPLT…ILCV), 50–70 (PNVV…KLLF), 82–102 (ILFI…WAVI), 115–135 (VGVL…IIAG), 155–175 (ISYE…TGTL), 187–207 (LPWW…ISVL), 235–255 (MGFA…SAMT), 275–295 (IPGF…FLWI), and 311–331 (GWKV…SVLF).

This sequence belongs to the complex I subunit 1 family. As to quaternary structure, NDH-1 is composed of 14 different subunits. Subunits NuoA, H, J, K, L, M, N constitute the membrane sector of the complex.

It localises to the cell inner membrane. The catalysed reaction is a quinone + NADH + 5 H(+)(in) = a quinol + NAD(+) + 4 H(+)(out). NDH-1 shuttles electrons from NADH, via FMN and iron-sulfur (Fe-S) centers, to quinones in the respiratory chain. The immediate electron acceptor for the enzyme in this species is believed to be ubiquinone. Couples the redox reaction to proton translocation (for every two electrons transferred, four hydrogen ions are translocated across the cytoplasmic membrane), and thus conserves the redox energy in a proton gradient. This subunit may bind ubiquinone. This chain is NADH-quinone oxidoreductase subunit H, found in Rickettsia typhi (strain ATCC VR-144 / Wilmington).